A 188-amino-acid polypeptide reads, in one-letter code: UPF0157 protein VC_A0354 (188 aa).

The protein belongs to the UPF0157 (GrpB) family.

This is UPF0157 protein VC_A0354 from Vibrio cholerae serotype O1 (strain ATCC 39315 / El Tor Inaba N16961).